Here is a 196-residue protein sequence, read N- to C-terminus: Nodulation protein A (196 aa).

It belongs to the NodA family.

The protein resides in the cytoplasm. Its function is as follows. N-acyltransferase required for nodulation. Acts in the production of a small, heat-stable compound (Nod) that stimulates mitosis in various plant protoplasts. The sequence is that of Nodulation protein A from Sinorhizobium terangae.